The sequence spans 219 residues: Octanoyltransferase (219 aa).

A BPL/LPL catalytic domain is found at glutamate 31–leucine 219. Residues arginine 69–histidine 76, serine 153–glycine 155, and glycine 166–alanine 168 each bind substrate. Catalysis depends on cysteine 184, which acts as the Acyl-thioester intermediate.

The protein belongs to the LipB family.

Its subcellular location is the cytoplasm. It catalyses the reaction octanoyl-[ACP] + L-lysyl-[protein] = N(6)-octanoyl-L-lysyl-[protein] + holo-[ACP] + H(+). It participates in protein modification; protein lipoylation via endogenous pathway; protein N(6)-(lipoyl)lysine from octanoyl-[acyl-carrier-protein]: step 1/2. Its function is as follows. Catalyzes the transfer of endogenously produced octanoic acid from octanoyl-acyl-carrier-protein onto the lipoyl domains of lipoate-dependent enzymes. Lipoyl-ACP can also act as a substrate although octanoyl-ACP is likely to be the physiological substrate. This chain is Octanoyltransferase, found in Bdellovibrio bacteriovorus (strain ATCC 15356 / DSM 50701 / NCIMB 9529 / HD100).